The sequence spans 80 residues: Small ribosomal subunit protein bS18 (80 aa).

The protein belongs to the bacterial ribosomal protein bS18 family. In terms of assembly, part of the 30S ribosomal subunit. Forms a tight heterodimer with protein bS6.

Functionally, binds as a heterodimer with protein bS6 to the central domain of the 16S rRNA, where it helps stabilize the platform of the 30S subunit. The protein is Small ribosomal subunit protein bS18 of Staphylococcus saprophyticus subsp. saprophyticus (strain ATCC 15305 / DSM 20229 / NCIMB 8711 / NCTC 7292 / S-41).